The primary structure comprises 529 residues: Bifunctional purine biosynthesis protein PurH (529 aa).

The 151-residue stretch at Pro8 to Thr158 folds into the MGS-like domain.

This sequence belongs to the PurH family.

It catalyses the reaction (6R)-10-formyltetrahydrofolate + 5-amino-1-(5-phospho-beta-D-ribosyl)imidazole-4-carboxamide = 5-formamido-1-(5-phospho-D-ribosyl)imidazole-4-carboxamide + (6S)-5,6,7,8-tetrahydrofolate. The catalysed reaction is IMP + H2O = 5-formamido-1-(5-phospho-D-ribosyl)imidazole-4-carboxamide. The protein operates within purine metabolism; IMP biosynthesis via de novo pathway; 5-formamido-1-(5-phospho-D-ribosyl)imidazole-4-carboxamide from 5-amino-1-(5-phospho-D-ribosyl)imidazole-4-carboxamide (10-formyl THF route): step 1/1. It participates in purine metabolism; IMP biosynthesis via de novo pathway; IMP from 5-formamido-1-(5-phospho-D-ribosyl)imidazole-4-carboxamide: step 1/1. The sequence is that of Bifunctional purine biosynthesis protein PurH from Caulobacter vibrioides (strain ATCC 19089 / CIP 103742 / CB 15) (Caulobacter crescentus).